The following is a 475-amino-acid chain: ATP synthase subunit beta (475 aa).

Residue 152-159 (GGAGVGKT) participates in ATP binding.

This sequence belongs to the ATPase alpha/beta chains family. As to quaternary structure, F-type ATPases have 2 components, CF(1) - the catalytic core - and CF(0) - the membrane proton channel. CF(1) has five subunits: alpha(3), beta(3), gamma(1), delta(1), epsilon(1). CF(0) has three main subunits: a(1), b(2) and c(9-12). The alpha and beta chains form an alternating ring which encloses part of the gamma chain. CF(1) is attached to CF(0) by a central stalk formed by the gamma and epsilon chains, while a peripheral stalk is formed by the delta and b chains.

The protein localises to the cell inner membrane. It carries out the reaction ATP + H2O + 4 H(+)(in) = ADP + phosphate + 5 H(+)(out). Functionally, produces ATP from ADP in the presence of a proton gradient across the membrane. The catalytic sites are hosted primarily by the beta subunits. In Wolbachia sp. subsp. Drosophila simulans (strain wRi), this protein is ATP synthase subunit beta.